Consider the following 119-residue polypeptide: 5-hydroxyisourate hydrolase (119 aa).

Substrate is bound by residues H10, R48, and Y116.

Belongs to the transthyretin family. 5-hydroxyisourate hydrolase subfamily. In terms of assembly, homotetramer.

It catalyses the reaction 5-hydroxyisourate + H2O = 5-hydroxy-2-oxo-4-ureido-2,5-dihydro-1H-imidazole-5-carboxylate + H(+). It participates in purine metabolism; urate degradation; (S)-allantoin from urate: step 2/3. In terms of biological role, catalyzes the hydrolysis of 5-hydroxyisourate (HIU) to 2-oxo-4-hydroxy-4-carboxy-5-ureidoimidazoline (OHCU). The protein is 5-hydroxyisourate hydrolase of Deinococcus radiodurans (strain ATCC 13939 / DSM 20539 / JCM 16871 / CCUG 27074 / LMG 4051 / NBRC 15346 / NCIMB 9279 / VKM B-1422 / R1).